The sequence spans 63 residues: Cytochrome c oxidase subunit 5C-1 (63 aa).

A helical membrane pass occupies residues 15-34 (SEVKELIIGSVLGLAAGGLW).

The protein belongs to the cytochrome c oxidase subunit 5C family.

It is found in the mitochondrion inner membrane. Functionally, this protein is one of the nuclear-coded polypeptide chains of cytochrome c oxidase, the terminal oxidase in mitochondrial electron transport. The polypeptide is Cytochrome c oxidase subunit 5C-1 (COX5C1) (Helianthus annuus (Common sunflower)).